The primary structure comprises 132 residues: Large ribosomal subunit protein uL14 (132 aa).

Belongs to the universal ribosomal protein uL14 family. In terms of assembly, part of the 50S ribosomal subunit. Forms a cluster with proteins L3 and L24e, part of which may contact the 16S rRNA in 2 intersubunit bridges.

Functionally, binds to 23S rRNA. Forms part of two intersubunit bridges in the 70S ribosome. The protein is Large ribosomal subunit protein uL14 of Methanocella arvoryzae (strain DSM 22066 / NBRC 105507 / MRE50).